A 668-amino-acid polypeptide reads, in one-letter code: WD repeat-containing protein 48 homolog (668 aa).

WD repeat units lie at residues 26–65, 71–110, 113–152, 164–203, 206–245, 248–287, 290–329, and 350–389; these read QHRNGVNALQLDANNGKLYSAGRDAIIRVWNTRTDSSEKY, HHNDWVNDIVLCCNGRNLISASCDTTVKVWNAQKGFCMST, THRDYVQALAYAKDREQVASAGLDKAIFLWDVNTLTALTA, GSKDSIYSLAMNPSGTVIVSGSTENILRIWDPRTCMRRMK, GHTENVRCLVVSPDGNQVVSGSSDGTIKVWNLGQQRCVQT, VHKEGVWSLLMSENFQYIISGSRDRNIIVTEMRNPSNKTL, EEQAPVLSLGYNIDKTGVWATTWNSDIRCWKLPMYDRCTL, and KGGAAIKECAVLNDKRYIITKDSQDQVVVYDVLRVVKKEQ. Positions 592–616 are disordered; that stretch reads ETTPSGGNANNSLQNSQSDANSEGS.

This sequence belongs to the WD repeat WDR48 family. As to quaternary structure, catalytic component of the Usp12-46 deubiquitylase complex consisting of Usp12-46, Wdr20 and Uaf1; regulatory subunit that, together wtih Wdr20, stabilizes Usp12-46. The Usp12-46 deubiquitylase complex associates with arr/arrow; the interaction leads to deubiquitination and stabilization of arr/arrow.

Functionally, regulatory component of the Usp12-46 deubiquitylase complex. activates deubiquitination by increasing the catalytic turnover without increasing the affinity of deubiquitinating enzymes for the substrate. The complex deubiquitylates the wg/wingless-signaling receptor arr/arrow, which stabilizes the receptor and increases its concentration at the cell surface; this enhances the sensitivity of cells to wg/wingless-signal stimulation. This increases the amplitude and spatial range of the signaling response to the wg/wingless morphogen gradient, facilitating the precise concentration-dependent regulation of its target genes. Together with Wdr20 and Usp12-46 required for wg/wingless-mediated signaling in the wing imaginal disc and for wg/wingless-dependent regulation of intestinal stem cell proliferation. The sequence is that of WD repeat-containing protein 48 homolog from Drosophila melanogaster (Fruit fly).